A 313-amino-acid polypeptide reads, in one-letter code: Nodulation protein D 3 (313 aa).

The region spanning 6–63 is the HTH lysR-type domain; it reads LDLNLLVALDALMTKRSVTAAARSINLSQPAMSSAIARLRSYFQDELFRMQGRELITT. Positions 23 to 42 form a DNA-binding region, H-T-H motif; the sequence is VTAAARSINLSQPAMSSAIA.

The protein belongs to the LysR transcriptional regulatory family.

In terms of biological role, nodD regulates the expression of the nodABCFE genes which encode other nodulation proteins. NodD is also a negative regulator of its own expression. Binds flavonoids as inducers. This Rhizobium meliloti (strain 1021) (Ensifer meliloti) protein is Nodulation protein D 3 (nodD3).